A 161-amino-acid chain; its full sequence is Allophycocyanin beta subunit (161 aa).

Residue Asn71 is modified to N4-methylasparagine. Cys81 serves as a coordination point for (2R,3E)-phycocyanobilin.

Belongs to the phycobiliprotein family. As to quaternary structure, heterodimer of an alpha and a beta chain. Post-translationally, contains one covalently linked phycocyanobilin chromophore. The chromophore is added by the phycocyanobilin lyase CpcUS.

It localises to the cellular thylakoid membrane. In terms of biological role, light-harvesting photosynthetic bile pigment-protein from the phycobiliprotein complex. Allophycocyanin has a maximum absorption at approximately 650 nanometers. This Picosynechococcus sp. (strain ATCC 27264 / PCC 7002 / PR-6) (Agmenellum quadruplicatum) protein is Allophycocyanin beta subunit (apcB).